Reading from the N-terminus, the 297-residue chain is Formylmethanofuran--tetrahydromethanopterin formyltransferase (297 aa).

It belongs to the FTR family. As to quaternary structure, homotetramer.

Its subcellular location is the cytoplasm. The catalysed reaction is N-formylmethanofuran + 5,6,7,8-tetrahydromethanopterin + H(+) = N(5)-formyl-5,6,7,8-tetrahydromethanopterin + methanofuran. It participates in one-carbon metabolism; methanogenesis from CO(2); 5,10-methenyl-5,6,7,8-tetrahydromethanopterin from CO(2): step 2/3. Catalyzes the reversible transfer of a formyl group from formylmethanofuran (formyl-MFR) to tetrahydromethanopterin (H(4)MPT) to produce 5-formyl tetrahydromethanopterin (5-formyl-H(4)MPT) and methanofuran (MFR). This chain is Formylmethanofuran--tetrahydromethanopterin formyltransferase, found in Methanothermus fervidus (strain ATCC 43054 / DSM 2088 / JCM 10308 / V24 S).